Consider the following 334-residue polypeptide: L-lactate dehydrogenase B chain (334 aa).

An NAD(+)-binding site is contributed by 30–58; it reads GQVGMACAVSVLLKELADELALVDILEDK. Positions 107, 139, and 170 each coordinate substrate. Residue N139 participates in NAD(+) binding. H194 serves as the catalytic Proton acceptor. Residue T249 participates in substrate binding.

This sequence belongs to the LDH/MDH superfamily. LDH family. Homotetramer.

The protein localises to the cytoplasm. It carries out the reaction (S)-lactate + NAD(+) = pyruvate + NADH + H(+). It participates in fermentation; pyruvate fermentation to lactate; (S)-lactate from pyruvate: step 1/1. Functionally, interconverts simultaneously and stereospecifically pyruvate and lactate with concomitant interconversion of NADH and NAD(+). This chain is L-lactate dehydrogenase B chain (ldhb), found in Xenopus laevis (African clawed frog).